Consider the following 689-residue polypeptide: Glycine--tRNA ligase beta subunit (689 aa).

The protein belongs to the class-II aminoacyl-tRNA synthetase family. Tetramer of two alpha and two beta subunits.

The protein resides in the cytoplasm. The enzyme catalyses tRNA(Gly) + glycine + ATP = glycyl-tRNA(Gly) + AMP + diphosphate. In Shewanella putrefaciens (strain CN-32 / ATCC BAA-453), this protein is Glycine--tRNA ligase beta subunit.